Consider the following 672-residue polypeptide: Poly-beta-1,6-N-acetyl-D-glucosamine N-deacetylase (672 aa).

Positions 1 to 20 are cleaved as a signal peptide; sequence MLRNGNKYLLMLVSIIMLTA. Cys21 is lipidated: N-palmitoyl cysteine. Cys21 is lipidated: S-diacylglycerol cysteine. In terms of domain architecture, NodB homology spans 107–349; sequence KAVVLTFDDG…IQRVKDMQIS (243 aa).

It belongs to the polysaccharide deacetylase family.

The protein localises to the cell outer membrane. Catalyzes the N-deacetylation of poly-beta-1,6-N-acetyl-D-glucosamine (PGA), a biofilm adhesin polysaccharide. N-deacetylation promotes PGA export through the PgaA porin. In Escherichia coli (strain K12), this protein is Poly-beta-1,6-N-acetyl-D-glucosamine N-deacetylase (pgaB).